The primary structure comprises 382 residues: Apolipoprotein A-IV (382 aa).

A signal peptide spans 1–20 (MFLKAVVLSLALVAVTGARA). Tandem repeats lie at residues 33–54 (DYFSQLGSNAKKAVEHLQKSEL), 60–81 (TLFQDKLGEVNTYTEDLQKKLV), 82–103 (PFATELHERLTKDSEKLKEEIR), 115–136 (PHATEVSQKIGDNVRELQQRLG), 137–158 (PFTGGLRTQVNTQVQQLQRQLK), 159–180 (PYAERMESVLRQNIRNLEASVA), 181–202 (PYADEFKAKIDQNVEELKGSLT), 203–224 (PYAEELKAKIDQNVEELRRSLA), 225–246 (PYAQDVQEKLNHQLEGLAFQMK), 247–268 (KQAEELKAKISANADELRQKLV), 269–286 (PVAENVHGHLKGNTEGLQ), 287–308 (KSLLELRSHLDQQVEEFRLKVE), and 309–330 (PYGETFNKALVQQVEDLRQKLG). The 13 X 22 AA approximate tandem repeats stretch occupies residues 33 to 330 (DYFSQLGSNA…QVEDLRQKLG (298 aa)). The interval 361 to 382 (EASQGQSQALPAQEKAQAPLEG) is disordered.

It belongs to the apolipoprotein A1/A4/E family. Homodimer. In terms of tissue distribution, secreted in plasma.

It is found in the secreted. Its function is as follows. May have a role in chylomicrons and VLDL secretion and catabolism. Required for efficient activation of lipoprotein lipase by ApoC-II; potent activator of LCAT. Apoa-IV is a major component of HDL and chylomicrons. The sequence is that of Apolipoprotein A-IV (APOA4) from Sus scrofa (Pig).